We begin with the raw amino-acid sequence, 150 residues long: Protein-arginine-phosphatase (150 aa).

Cysteine 7 acts as the Nucleophile in catalysis. Position 8–13 (8–13 (TGNTCR)) interacts with substrate. Arginine 13 is an active-site residue. Residue aspartate 118 is the Proton donor/acceptor of the active site.

This sequence belongs to the low molecular weight phosphotyrosine protein phosphatase family.

The catalysed reaction is N(omega)-phospho-L-arginyl-[protein] + H2O = L-arginyl-[protein] + phosphate. Efficiently inhibited by Cu(2+) ion, Zn(2+) ion, sodium pyrophosphate and N-ethylmaleimide, while the addition of Mg(2+), Ca(2+) or Fe(3+) ions has minimal effect. Inhibited in a competitive manner by vanadate. Catalyzes the specific dephosphorylation of phosphoarginine residues in a large number of proteins. Counteracts the protein arginine kinase McsB in vivo. Can dephosphorylate CtsR-P; thus, can restore the DNA-binding ability of the CtsR repressor by reversing the McsB-mediated phosphorylation. Is the only active pArg phosphatase present in B.subtilis. Exhibits almost no activity against pSer, pThr, or pTyr peptides. Appears to play a role in B.subtilis stress resistance. Protein arginine phosphorylation has a physiologically important role and is involved in the regulation of many critical cellular processes, such as protein homeostasis, motility, competence, and stringent and stress responses, by regulating gene expression and protein activity. This Bacillus subtilis (strain 168) protein is Protein-arginine-phosphatase (ywlE).